Here is a 207-residue protein sequence, read N- to C-terminus: MKSSNGPLRIGIGGPVGSGKTTLCEVLLKSMRDRYSMAVVTNDIYTKEDALILARLQAISEDRIVGVETGGCPHTAIREDASLNLAAIAHLNRRFPDLDIILIESGGDNLAATFSPDLADLTLYVISVAQGEKIPRKGGPAITRSDLLIINKTDLAPYVGANLDVMRSDTEKVREGRPYVMTDLSRRQGAEEVVAFIEKMGGLALAA.

14–21 (GPVGSGKT) is a GTP binding site.

The protein belongs to the SIMIBI class G3E GTPase family. UreG subfamily. As to quaternary structure, homodimer. UreD, UreF and UreG form a complex that acts as a GTP-hydrolysis-dependent molecular chaperone, activating the urease apoprotein by helping to assemble the nickel containing metallocenter of UreC. The UreE protein probably delivers the nickel.

It localises to the cytoplasm. Facilitates the functional incorporation of the urease nickel metallocenter. This process requires GTP hydrolysis, probably effectuated by UreG. The protein is Urease accessory protein UreG of Chelativorans sp. (strain BNC1).